We begin with the raw amino-acid sequence, 340 residues long: MANVLINGYGSIGKRVADAVAKQDDMKVIGVTKTKPDFEAKMAVEKGYKLFAAIPERKHLFEEAGIPVEGTLDDIIEDADIVVDGAPKKIGKANLENVYKKHGVKAIIQGGEKAGDAQDSFNSLWSYDRCYGKDYIRLVSCNTTGLCRSMYAINSVADILKARIVLIRRAADPNDIKTGPVNAIVPNPVTVPSHHGPDVVSVIPELDGKIMTSAVIVPTTLMHMHSIMVETSGTNRDEIIDALAKTPRILTVKASEGFDSTAKIIEYARDLGRSRYDLNEIAVWEESVNVVDNEVYMMQAIHQESDVIPENVDCIRAMLEMESDNLKSIEKTNKALGLIK.

Residues Ser11–Ile12 and Gly111 each bind NAD(+). Residue Ser140–Asn142 participates in D-glyceraldehyde 3-phosphate binding. Catalysis depends on Cys141, which acts as the Nucleophile. NAD(+) is bound at residue Arg169. His195–Gly196 is a binding site for D-glyceraldehyde 3-phosphate. Gln303 provides a ligand contact to NAD(+).

This sequence belongs to the glyceraldehyde-3-phosphate dehydrogenase family. Homotetramer.

The protein localises to the cytoplasm. It catalyses the reaction D-glyceraldehyde 3-phosphate + phosphate + NADP(+) = (2R)-3-phospho-glyceroyl phosphate + NADPH + H(+). The catalysed reaction is D-glyceraldehyde 3-phosphate + phosphate + NAD(+) = (2R)-3-phospho-glyceroyl phosphate + NADH + H(+). Its pathway is carbohydrate degradation; glycolysis; pyruvate from D-glyceraldehyde 3-phosphate: step 1/5. This chain is Glyceraldehyde-3-phosphate dehydrogenase, found in Methanococcus maripaludis (strain DSM 14266 / JCM 13030 / NBRC 101832 / S2 / LL).